A 299-amino-acid chain; its full sequence is UDP-N-acetylenolpyruvoylglucosamine reductase (299 aa).

In terms of domain architecture, FAD-binding PCMH-type spans 29 to 193 (RIGGPAEIFL…TAASLRFRKA (165 aa)). Residue Arg173 is part of the active site. Residue Ser222 is the Proton donor of the active site. Glu292 is a catalytic residue.

The protein belongs to the MurB family. Requires FAD as cofactor.

It localises to the cytoplasm. The enzyme catalyses UDP-N-acetyl-alpha-D-muramate + NADP(+) = UDP-N-acetyl-3-O-(1-carboxyvinyl)-alpha-D-glucosamine + NADPH + H(+). Its pathway is cell wall biogenesis; peptidoglycan biosynthesis. Functionally, cell wall formation. The chain is UDP-N-acetylenolpyruvoylglucosamine reductase from Syntrophotalea carbinolica (strain DSM 2380 / NBRC 103641 / GraBd1) (Pelobacter carbinolicus).